The sequence spans 250 residues: Acetoacetate decarboxylase 1 (250 aa).

Lys120 acts as the Schiff-base intermediate with acetoacetate in catalysis.

This sequence belongs to the ADC family.

The enzyme catalyses acetoacetate + H(+) = acetone + CO2. Catalyzes the conversion of acetoacetate to acetone and carbon dioxide. The protein is Acetoacetate decarboxylase 1 of Bradyrhizobium diazoefficiens (strain JCM 10833 / BCRC 13528 / IAM 13628 / NBRC 14792 / USDA 110).